The chain runs to 130 residues: MSEKFEYGTGRRKTATARTRIYAGSGGITVNGRSFENYFPRKTLQMIIRQPLVLAKLADKLDVRVNVAGGGVTGQAEAVRHGISRALLLVDPALRPVLKKAGFLTRDARKKERKKYGLRAARARYQYSKR.

The protein belongs to the universal ribosomal protein uS9 family.

This is Small ribosomal subunit protein uS9 from Desulfovibrio desulfuricans (strain ATCC 27774 / DSM 6949 / MB).